A 202-amino-acid chain; its full sequence is Urease accessory protein UreF (202 aa).

Belongs to the UreF family. As to quaternary structure, ureD, UreF and UreG form a complex that acts as a GTP-hydrolysis-dependent molecular chaperone, activating the urease apoprotein by helping to assemble the nickel containing metallocenter of UreC. The UreE protein probably delivers the nickel.

The protein localises to the cytoplasm. In terms of biological role, required for maturation of urease via the functional incorporation of the urease nickel metallocenter. This Sporosarcina pasteurii (Bacillus pasteurii) protein is Urease accessory protein UreF.